The primary structure comprises 183 residues: Ribulose bisphosphate carboxylase small subunit, chloroplastic (183 aa).

A chloroplast-targeting transit peptide spans 1-58 (MASSMLSTAAVACINRASPAQASMVAPFTGLKSTSAFPTTRKTTTDITSIASNGGRVQ).

This sequence belongs to the RuBisCO small chain family. As to quaternary structure, heterohexadecamer of 8 large and 8 small subunits.

It localises to the plastid. The protein resides in the chloroplast. Functionally, ruBisCO catalyzes two reactions: the carboxylation of D-ribulose 1,5-bisphosphate, the primary event in carbon dioxide fixation, as well as the oxidative fragmentation of the pentose substrate. Both reactions occur simultaneously and in competition at the same active site. Although the small subunit is not catalytic it is essential for maximal activity. The chain is Ribulose bisphosphate carboxylase small subunit, chloroplastic from Hevea brasiliensis (Para rubber tree).